The chain runs to 351 residues: uncharacterized protein (351 aa).

The Mn(2+) site is built by Asp215, Asp226, His290, Glu319, and Glu333.

The protein belongs to the peptidase M24B family. Mn(2+) is required as a cofactor.

This is an uncharacterized protein from Staphylococcus aureus (strain USA300).